Consider the following 431-residue polypeptide: MEQFSTSSSESSDSSSEYSLEFYMDTSWVLDAANLVFFMQAGFGMLEAGMVRAKNTKSILLKNLINTAICAISYYCVGHSFAYGKVNPNSFVGFGNFFLMDYTHYAYWMIQWAYAATATTIATGAMAERLQLHCYILFTLVQTILIYPFVAHWIWSQNGWLFDLGIVDFAGGAVIHIVAGITGACGSFLLGPRIGRFNQESGKPKNLPGHSVVLMSLGAMILWYSWYGYTAGASLGMTRSRVLPASRVSVVVTLSGATGLITVLGIGKIFNGHYDLVKGINGLIAGLVSSTSSCAYIEPWAAIIIGFIGGIVYWFSSWALLNWLRLDDPVDSTAIHLFGGCWSLISVAFFATHGRVRNPDIILPGGIFYGGGISLLWVQLVGMVLAILWAGFLSGIFFFTMDYFGKLRVDVDTELAGLDNSNHGGSAYIFD.

The Extracellular portion of the chain corresponds to 1–27 (MEQFSTSSSESSDSSSEYSLEFYMDTS). Residues 28-48 (WVLDAANLVFFMQAGFGMLEA) form a helical membrane-spanning segment. At 49–63 (GMVRAKNTKSILLKN) the chain is on the cytoplasmic side. Residues 64–84 (LINTAICAISYYCVGHSFAYG) traverse the membrane as a helical segment. Residues 85–102 (KVNPNSFVGFGNFFLMDY) are Extracellular-facing. The helical transmembrane segment at 103–125 (THYAYWMIQWAYAATATTIATGA) threads the bilayer. The Cytoplasmic portion of the chain corresponds to 126–134 (MAERLQLHC). Residues 135–155 (YILFTLVQTILIYPFVAHWIW) form a helical membrane-spanning segment. The Extracellular portion of the chain corresponds to 156–160 (SQNGW). The helical transmembrane segment at 161–181 (LFDLGIVDFAGGAVIHIVAGI) threads the bilayer. The Cytoplasmic segment spans residues 182-211 (TGACGSFLLGPRIGRFNQESGKPKNLPGHS). The helical transmembrane segment at 212–232 (VVLMSLGAMILWYSWYGYTAG) threads the bilayer. At 233–249 (ASLGMTRSRVLPASRVS) the chain is on the extracellular side. The chain crosses the membrane as a helical span at residues 250–270 (VVVTLSGATGLITVLGIGKIF). The Cytoplasmic portion of the chain corresponds to 271–300 (NGHYDLVKGINGLIAGLVSSTSSCAYIEPW). Residues 301 to 321 (AAIIIGFIGGIVYWFSSWALL) form a helical membrane-spanning segment. Over 322-333 (NWLRLDDPVDST) the chain is Extracellular. Residues 334–354 (AIHLFGGCWSLISVAFFATHG) traverse the membrane as a helical segment. Residues 355–357 (RVR) lie on the Cytoplasmic side of the membrane. A helical transmembrane segment spans residues 358 to 378 (NPDIILPGGIFYGGGISLLWV). Residue Gln379 is a topological domain, extracellular. A helical transmembrane segment spans residues 380–400 (LVGMVLAILWAGFLSGIFFFT). Residues 401-431 (MDYFGKLRVDVDTELAGLDNSNHGGSAYIFD) lie on the Cytoplasmic side of the membrane.

It belongs to the ammonia transporter channel (TC 1.A.11.2) family.

Its subcellular location is the cell membrane. It localises to the endosome membrane. It is found in the cytoplasmic vesicle. The protein resides in the phagosome membrane. Ammonium transporter that mediates the import of ammonium in prespore cells. Controls ammonium homeostasis during growth and development. Ammonium has been shown to function as a morphogen at multiple steps during the development. May function as an ammonia sensor that relays information concerning ammonia concentrations to the signaling pathway involved in the slug versus culmination choice and regulates prestalk gene expression. This chain is Ammonium transporter 3 (amtC), found in Dictyostelium discoideum (Social amoeba).